The chain runs to 353 residues: Lactosylceramide 4-alpha-galactosyltransferase (353 aa).

Residues 1-22 (MSKPPDLLLRLLRGAPRQRVCT) lie on the Cytoplasmic side of the membrane. The helical; Signal-anchor for type II membrane protein transmembrane segment at 23–43 (LFIIGFKFTFFVSIMIYWHVV) threads the bilayer. Over 44–353 (GEPKEKGQLY…TTHEAMKMYL (310 aa)) the chain is Lumenal. Residue Asn-121 is glycosylated (N-linked (GlcNAc...) asparagine). Positions 192 to 194 (DTD) match the DXD motif motif. Asn-203 is a glycosylation site (N-linked (GlcNAc...) asparagine).

Belongs to the glycosyltransferase 32 family.

The protein localises to the golgi apparatus membrane. The catalysed reaction is a beta-D-Gal-(1-&gt;4)-beta-D-Glc-(1&lt;-&gt;1)-Cer(d18:1(4E)) + UDP-alpha-D-galactose = a globoside Gb3Cer (d18:1(4E)) + UDP + H(+). It catalyses the reaction a beta-D-Gal-(1&lt;-&gt;1')-ceramide + UDP-alpha-D-galactose = alpha-D-Gal-(1-&gt;4)-beta-D-Gal-(1&lt;-&gt;1')-Cer + UDP + H(+). The protein operates within glycolipid biosynthesis. Its function is as follows. Catalyzes the transfer of galactose from UDP-alpha-D-galactose to lactosylceramide/beta-D-galactosyl-(1-&gt;4)-beta-D-glucosyl-(1&lt;-&gt;1)-ceramide(d18:1(4E)) to produce globotriaosylceramide/globoside Gb3Cer (d18:1(4E)). Also able to transfer galactose to galactosylceramide/beta-D-Gal-(1&lt;-&gt;1')-Cer. Globoside Gb3Cer is a glycosphingolipid of the globo serie, one of the major types of neutral root structures of glycosphingolipids, that constitute a significant portion of mammalian cell membranes. The chain is Lactosylceramide 4-alpha-galactosyltransferase (A4GALT) from Pan troglodytes (Chimpanzee).